The chain runs to 79 residues: D-alanyl carrier protein (79 aa).

The 77-residue stretch at 1 to 77 (MDVKAEVIEI…KIVEGVTELR (77 aa)) folds into the Carrier domain. Position 35 is an O-(pantetheine 4'-phosphoryl)serine (S35).

Belongs to the DltC family. 4'-phosphopantetheine is transferred from CoA to a specific serine of apo-DCP.

It is found in the cytoplasm. It participates in cell wall biogenesis; lipoteichoic acid biosynthesis. Its function is as follows. Carrier protein involved in the D-alanylation of lipoteichoic acid (LTA). The loading of thioester-linked D-alanine onto DltC is catalyzed by D-alanine--D-alanyl carrier protein ligase DltA. The DltC-carried D-alanyl group is further transferred to cell membrane phosphatidylglycerol (PG) by forming an ester bond, probably catalyzed by DltD. D-alanylation of LTA plays an important role in modulating the properties of the cell wall in Gram-positive bacteria, influencing the net charge of the cell wall. The protein is D-alanyl carrier protein of Streptococcus gordonii (strain Challis / ATCC 35105 / BCRC 15272 / CH1 / DL1 / V288).